The following is a 150-amino-acid chain: Large ribosomal subunit protein bL9 (150 aa).

Belongs to the bacterial ribosomal protein bL9 family.

Its function is as follows. Binds to the 23S rRNA. The sequence is that of Large ribosomal subunit protein bL9 from Albidiferax ferrireducens (strain ATCC BAA-621 / DSM 15236 / T118) (Rhodoferax ferrireducens).